The chain runs to 231 residues: Regulatory factor X-associated protein (231 aa).

Residues 1–163 (MEAQAVPEGS…GNVKLEESTD (163 aa)) are disordered. A compositionally biased stretch (acidic residues) spans 50 to 65 (ADAEDEAGDDDADLLD). The segment covering 115-138 (KQRKPWMCKKHRNKMYKDKYKKKK) has biased composition (basic residues). The short motif at 123–138 (KKHRNKMYKDKYKKKK) is the Nuclear localization signal element. A Glycyl lysine isopeptide (Lys-Gly) (interchain with G-Cter in SUMO2) cross-link involves residue Lys157.

In terms of assembly, RFX consists of at least 3 different subunits; RFXAP, RFX5 and RFX-B/RFXANK; with each subunit representing a separate complementation group. RFX forms cooperative DNA binding complexes with X2BP and CBF/NF-Y. RFX associates with CIITA to form an active transcriptional complex. Phosphorylated.

Its subcellular location is the nucleus. Its function is as follows. Part of the RFX complex that binds to the X-box of MHC II promoters. The polypeptide is Regulatory factor X-associated protein (Rfxap) (Mus musculus (Mouse)).